Reading from the N-terminus, the 324-residue chain is tRNA pseudouridine synthase B (324 aa).

Substrate is bound at residue His43. Asp48 acts as the Nucleophile in catalysis. Substrate-binding residues include Tyr76, Tyr179, and Leu200.

It belongs to the pseudouridine synthase TruB family. Type 1 subfamily.

The enzyme catalyses uridine(55) in tRNA = pseudouridine(55) in tRNA. In terms of biological role, responsible for synthesis of pseudouridine from uracil-55 in the psi GC loop of transfer RNAs. The polypeptide is tRNA pseudouridine synthase B (Yersinia pestis bv. Antiqua (strain Nepal516)).